Here is a 428-residue protein sequence, read N- to C-terminus: Aminotransferase verI (428 aa).

Lysine 254 bears the N6-(pyridoxal phosphate)lysine mark.

It belongs to the class-I pyridoxal-phosphate-dependent aminotransferase family. Requires pyridoxal 5'-phosphate as cofactor.

The protein operates within mycotoxin biosynthesis. In terms of biological role, aminotransferase; part of the gene cluster that mediates the biosynthesis of 11'-deoxyverticillin A, one of the dimeric epipolythiodioxopiperazines (ETPs) from the verticillin family that act as mycotoxins. 11'-deoxyverticillin A is required for normal conidiation. The nonribosomal peptide synthetase verP is speculated to be responsible for condensation of amino acids to form the carbon skeleton of verticillin, whereas the cluster-specific tailoring enzymes are involved in further modifications leading to the production of 11'-deoxyverticillin A. The chain is Aminotransferase verI from Clonostachys rogersoniana.